A 260-amino-acid polypeptide reads, in one-letter code: Phosphatidylglycerol--prolipoprotein diacylglyceryl transferase (260 aa).

A run of 4 helical transmembrane segments spans residues 17–37, 52–72, 85–105, and 113–133; these read VVKW…SWIF, LTAA…LHVI, ILSG…IGLW, and FNLG…QAIG. Arginine 134 is an a 1,2-diacyl-sn-glycero-3-phospho-(1'-sn-glycerol) binding site. Transmembrane regions (helical) follow at residues 170–190, 198–218, and 227–247; these read VPTQ…SLFI, GQLF…IGFV, and GLEQ…PFFI.

Belongs to the Lgt family.

It is found in the cell membrane. The enzyme catalyses L-cysteinyl-[prolipoprotein] + a 1,2-diacyl-sn-glycero-3-phospho-(1'-sn-glycerol) = an S-1,2-diacyl-sn-glyceryl-L-cysteinyl-[prolipoprotein] + sn-glycerol 1-phosphate + H(+). The protein operates within protein modification; lipoprotein biosynthesis (diacylglyceryl transfer). Functionally, catalyzes the transfer of the diacylglyceryl group from phosphatidylglycerol to the sulfhydryl group of the N-terminal cysteine of a prolipoprotein, the first step in the formation of mature lipoproteins. This is Phosphatidylglycerol--prolipoprotein diacylglyceryl transferase from Dehalococcoides mccartyi (strain ATCC BAA-2266 / KCTC 15142 / 195) (Dehalococcoides ethenogenes (strain 195)).